The chain runs to 587 residues: Aspartate--tRNA ligase (587 aa).

Position 174 (E174) interacts with L-aspartate. The aspartate stretch occupies residues 198–201 (QTFK). R220 contributes to the L-aspartate binding site. ATP is bound by residues 220–222 (RDE) and Q229. Residue H447 coordinates L-aspartate. An ATP-binding site is contributed by E481. R488 provides a ligand contact to L-aspartate. An ATP-binding site is contributed by 533–536 (GLDR).

Belongs to the class-II aminoacyl-tRNA synthetase family. Type 1 subfamily. As to quaternary structure, homodimer.

The protein localises to the cytoplasm. It carries out the reaction tRNA(Asp) + L-aspartate + ATP = L-aspartyl-tRNA(Asp) + AMP + diphosphate. Its function is as follows. Catalyzes the attachment of L-aspartate to tRNA(Asp) in a two-step reaction: L-aspartate is first activated by ATP to form Asp-AMP and then transferred to the acceptor end of tRNA(Asp). This is Aspartate--tRNA ligase from Porphyromonas gingivalis (strain ATCC BAA-308 / W83).